The chain runs to 1287 residues: MAVISKVTYSLYDQKEINATDIIISHVKNDDDIGTVKDGRLGAMDGALCKTCGKTELECFGHWGKVSIYKTHIVKPEFISEIIRLLNHICIHCGLLRSREPYSDDINLKELSGHALRRLKDKILSKKKSCWNSECMQPYQKITFSKKKVCFVNKLDDINVPNSLIYQKLISIHEKFWPLLEIHQYPANLFYTDYFPIPPLIIRPAISFWIDSIPKETNELTYLLGMIVKNCNLNADEQVIQKAVIEYDDIKIISNNTSSINLSYITSGKNNMIRSYIVARRKDQTARSVIGPSTSITVNEVGMPAYIRNTLTEKIFVNAFTVDKVKQLLASNQVKFYFNKRLNQLTRIRQGKFIKNKIHLLPGDWVEVAVQEYTSIIFGRQPSLHRYNVIASSIRATEGDTIKISPGIANSQNADFDGDEEWMILEQNPKAVIEQSILMYPTTLLKHDIHGAPVYGSIQDEIVAAYSLFRIQDLCLDEVLNILGKYGREFDPKGKCKFSGKDIYTYLIGEKINYPGLLKDGEIIANDVDSNFVVAMRHLSLAGLLSDHKSNVEGINFIIKSSYVFKRYLSIYGFGVTFKDLRPNSTFTNKLEAINVEKIELIKEAYAKYLNDVRDGKIVPLSKALEADYVESMLSNLTNLNIREIEEHMRQTLIDDPDNNLLKMAKAGYKVNPTELMYILGTYGQQRIDGEPAETRVLGRVLPYYLPDSKDPEGRGYILNSLTKGLTGSQYYFSMLVARSQSTDIVCETSRTGTLARKIIKKMEDMVVDGYGQVVIGNTLIKYAANYTKILGSVCKPVDLIYPDESMTWYLEISALWNKIKQGFVYSQKQKLAKKTLAPFNFLVFVKPTTEDNAIKVKDLYDMIHNVIDDVREKYFFTVSNIDFMEYIFLTHLNPSRIRITKETAITIFEKFYEKLNYTLGGGTPIGIISAQVLSEKFTQQALSSFHTTEKSGAVKQKLGFNEFNNLTNLSKNKTEIITLVSDDISKLQSVKINFEFVCLGELNPDHSLFEKKQDRYVVDIIVNKLYIKRAEITELVVEYMIERFISFSVIVKEWGMETFIEDEDNIRFTVYLNFVEPEELNLSKFMMVLPGAANKGKISKFKIPISDYTGYDCFNQTKKLNKMTVELMNLKELGSFDLENVNVYPGVWNTYDIFGIEAAREYLCEAMLNTYGEGFDYLYQPCDLLASLLCASYEPESVNKFKFGAASTLKRATFGDNKALLNAALHKKSEPINDNSSCHFFSKVPNIGTGYYKYFIDLGLLMRMERKLSDKISSQKIKEMEETEDF.

The protein belongs to the poxviridae DNA-directed RNA polymerase 147 kDa subunit family. As to quaternary structure, the DNA-dependent RNA polymerase used for intermediate and late genes expression consists of eight subunits Rpo30/OPG66, Rpo7/OPG90, Rpo22/OPG103, Rpo147/OPG105, Rpo18/OPG119, Rpo19/OPG131, Rpo132/OPG151 and Rpo35/OPG156. The same holoenzyme, with the addition of the transcription-specificity factor OPG109, is used for early gene expression.

The protein resides in the virion. The catalysed reaction is RNA(n) + a ribonucleoside 5'-triphosphate = RNA(n+1) + diphosphate. Its function is as follows. Part of the DNA-dependent RNA polymerase which catalyzes the transcription of viral DNA into RNA using the four ribonucleoside triphosphates as substrates. Responsible for the transcription of early, intermediate and late genes. DNA-dependent RNA polymerase associates with the early transcription factor (ETF), itself composed of OPG118 and OPG133, thereby allowing the early genes transcription. Late transcription, and probably also intermediate transcription, require newly synthesized RNA polymerase. The polypeptide is DNA-directed RNA polymerase 147 kDa polypeptide (OPG105) (Bos taurus (Bovine)).